We begin with the raw amino-acid sequence, 292 residues long: Peroxisomal 2,4-dienoyl-CoA reductase [(3E)-enoyl-CoA-producing] (292 aa).

Residues glycine 35–isoleucine 40, arginine 60–arginine 64, and aspartate 86 contribute to the NADP(+) site. Arginine 60 contributes to the substrate binding site. Substrate contacts are provided by residues arginine 88, phenylalanine 118, and serine 126 to asparagine 128. Lysine 151 is subject to N6-acetyllysine. Residues lysine 182 and proline 208–threonine 214 each bind NADP(+). Arginine 219 contributes to the substrate binding site. Serine 287 bears the Phosphoserine mark. Positions alanine 290–leucine 292 match the Microbody targeting signal motif. Lysine 291 carries the post-translational modification N6-acetyllysine.

It belongs to the short-chain dehydrogenases/reductases (SDR) family. 2,4-dienoyl-CoA reductase subfamily. As to quaternary structure, monomer, dimer and oligomer.

Its subcellular location is the peroxisome. The enzyme catalyses a (2E,4Z)-dienoyl-CoA + NADPH + H(+) = a 4,5-saturated-(3E)-enoyl-CoA + NADP(+). It catalyses the reaction a (2E,4E)-dienoyl-CoA + NADPH + H(+) = a 4,5-saturated-(3E)-enoyl-CoA + NADP(+). The catalysed reaction is (2E,4E)-hexadienoyl-CoA + NADPH + H(+) = (3E)-hexenoyl-CoA + NADP(+). It carries out the reaction (2E,4E)-decadienoyl-CoA + NADPH + H(+) = (3E)-decenoyl-CoA + NADP(+). The enzyme catalyses (2E,4Z,7Z,10Z,13Z,16Z,19Z)-docosaheptaenoyl-CoA + NADPH + H(+) = (3E,7Z,10Z,13Z,16Z,19Z)-docosahexaenoyl-CoA + NADP(+). Its function is as follows. Auxiliary enzyme of beta-oxidation. Participates in the degradation of unsaturated fatty enoyl-CoA esters having double bonds in both even- and odd-numbered positions in peroxisome. Catalyzes the NADP-dependent reduction of 2,4-dienoyl-CoA to yield trans-3-enoyl-CoA. Has activity towards short and medium chain 2,4-dienoyl-CoAs, but also towards 2,4,7,10,13,16,19-docosaheptaenoyl-CoA, suggesting that it does not constitute a rate limiting step in the peroxisomal degradation of docosahexaenoic acid. The chain is Peroxisomal 2,4-dienoyl-CoA reductase [(3E)-enoyl-CoA-producing] (Decr2) from Rattus norvegicus (Rat).